The following is a 475-amino-acid chain: Glycogen synthase (475 aa).

An ADP-alpha-D-glucose-binding site is contributed by lysine 15.

It belongs to the glycosyltransferase 1 family. Bacterial/plant glycogen synthase subfamily.

It catalyses the reaction [(1-&gt;4)-alpha-D-glucosyl](n) + ADP-alpha-D-glucose = [(1-&gt;4)-alpha-D-glucosyl](n+1) + ADP + H(+). It functions in the pathway glycan biosynthesis; glycogen biosynthesis. Functionally, synthesizes alpha-1,4-glucan chains using ADP-glucose. The chain is Glycogen synthase from Anaeromyxobacter sp. (strain Fw109-5).